The chain runs to 180 residues: 3-phenylpropionate/cinnamic acid dioxygenase subunit beta (180 aa).

The protein belongs to the bacterial ring-hydroxylating dioxygenase beta subunit family. As to quaternary structure, this dioxygenase system consists of four proteins: the two subunits of the hydroxylase component (HcaE and HcaF), a ferredoxin (HcaC) and a ferredoxin reductase (HcaD).

It carries out the reaction 3-phenylpropanoate + NADH + O2 + H(+) = 3-(cis-5,6-dihydroxycyclohexa-1,3-dien-1-yl)propanoate + NAD(+). It catalyses the reaction (E)-cinnamate + NADH + O2 + H(+) = (2E)-3-(cis-5,6-dihydroxycyclohexa-1,3-dien-1-yl)prop-2-enoate + NAD(+). The protein operates within aromatic compound metabolism; 3-phenylpropanoate degradation. Its function is as follows. Part of the multicomponent 3-phenylpropionate dioxygenase. Converts 3-phenylpropionic acid (PP) and cinnamic acid (CI) into 3-phenylpropionate-dihydrodiol (PP-dihydrodiol) and cinnamic acid-dihydrodiol (CI-dihydrodiol), respectively. This is 3-phenylpropionate/cinnamic acid dioxygenase subunit beta from Photorhabdus laumondii subsp. laumondii (strain DSM 15139 / CIP 105565 / TT01) (Photorhabdus luminescens subsp. laumondii).